Consider the following 775-residue polypeptide: MVKHMFLEDVNNLISDDKWLIFQNEYNTEVNPRYETLFTLTNGYMGVRGTFEEGSEGERSGNFIAGIFDKSDAQVREIVNAQNWLRIKLYVEGEELSLDKCQLIEFKRILDMKKGILFRSMLIKDSKDRITRIEGYRFISRSDLHRSAIKLFVTPVNYSGVVGIESIIDGTVLNSADSPKHRVKHLKVADNSSLNKSGVYLETATIDDDIRIATGSAVRLYHYEDKEKNNIAKFKRFLPLGEMSIEYFEFDGTENKTVVIDKFIITYTSRDVKKGLLKSTVEKELFAFAGEGIDKELQRHIEVYEELWSVADINIEGDEEADKALRFNIFHLMSSVNENDPMVSIAAKALHGEGYKGHVFWDTEIFMLPFFIYVHPKAAKTLLMYRYNMLDAARKNAALNGYKGAQYPWESADTGEEETPKWGFDYMGNPVRIWTGDLEHHITADIAFAVWEYFRATEDIEFMLNYGAEVIFETARFWVSRCEYVKELDRYEINNVIGPDEFHEHVDNNAYTDYLAKWNIKKGLELINMLKEKYPEHYHAISNKKCLTNEEMEKWKEVEEKIYIPYDKDKKLIEQFEGYFDKKDYVIDKFDENNMPIWPEGVDITKLGDTQLIKQADVVMLMLLLGEEFDEETKRINYEYYEKRTMHKSSLGPSMYAIMGLKVGDHKNAYQSFMRSANVDLVDNQGNTKEGLHAASAGGTWQVVVFGFGGMEIDKEGALNINSWLPEKWDKLSYKVFWKGNLIEVIVTKQEVTVKKLKGKGNIKVKVKGKELTIE.

361-362 (WD) contributes to the substrate binding site. The Proton donor role is filled by Glu501. Position 614-615 (614-615 (KQ)) interacts with substrate.

Belongs to the glycosyl hydrolase 65 family. Homohexamer.

The enzyme catalyses kojibiose + phosphate = beta-D-glucose 1-phosphate + D-glucose. With respect to regulation, inhibited by Hg(2+) and Pb(2+). Functionally, catalyzes the reversible phosphorolysis of kojibiose into beta-D-glucose 1-phosphate (Glc1P) and D-glucose. Can act with alpha-1,2-oligoglucans, such as selaginose, but more slowly. Inactive when disaccharides with linkages other than alpha-1,2 linkages, such as sophorose, trehalose, neotrehalose, nigerose, laminaribiose, maltose, cellobiose, isomaltose, gentiobiose, sucrose and lactose, are used as substrates. In contrast, shows broad specificity for the reverse reaction. Various monosaccharides and disaccharides having a glucosyl residue at the non-reducing end are effective acceptors. The sequence is that of Kojibiose phosphorylase from Thermoanaerobacter brockii (Thermoanaerobium brockii).